The chain runs to 130 residues: NADH-quinone oxidoreductase subunit A (130 aa).

3 helical membrane-spanning segments follow: residues 17–37 (YIFV…MLAL), 74–94 (LVGI…PWAV), and 99–119 (LGPA…VGFV).

Belongs to the complex I subunit 3 family. As to quaternary structure, NDH-1 is composed of 14 different subunits. Subunits NuoA, H, J, K, L, M, N constitute the membrane sector of the complex.

Its subcellular location is the cell inner membrane. The enzyme catalyses a quinone + NADH + 5 H(+)(in) = a quinol + NAD(+) + 4 H(+)(out). Its function is as follows. NDH-1 shuttles electrons from NADH, via FMN and iron-sulfur (Fe-S) centers, to quinones in the respiratory chain. The immediate electron acceptor for the enzyme in this species is believed to be ubiquinone. Couples the redox reaction to proton translocation (for every two electrons transferred, four hydrogen ions are translocated across the cytoplasmic membrane), and thus conserves the redox energy in a proton gradient. This is NADH-quinone oxidoreductase subunit A from Neorickettsia sennetsu (strain ATCC VR-367 / Miyayama) (Ehrlichia sennetsu).